The chain runs to 378 residues: Apolipoprotein A-IV (378 aa).

The first 20 residues, 1–20 (MFLKAVVLTLSLVAITGARA), serve as a signal peptide directing secretion. Tandem repeats lie at residues 33–54 (DYFS…QSEL), 60–81 (SVTK…RNSW), 82–98 (EHSR…RQVG), 110–130 (PNCD…QAVG), 131–152 (PYAE…NQLT), 153–174 (SHAQ…SSLT), 175–196 (PFAD…GHLT), 197–218 (PYTD…RSLA), 219–240 (PYAQ…FQMK), 241–262 (KNAE…QRLA), 263–280 (PVAE…AGLH), 281–302 (KSLA…RNVG), and 303–324 (PYGE…QKLG). The 13 X 22 AA approximate tandem repeats stretch occupies residues 33 to 324 (DYFSQLSNNA…QVEELRQKLG (292 aa)). Residues 354 to 378 (EKESQDTPVALPKQEQEQSAVPLES) are disordered.

It belongs to the apolipoprotein A1/A4/E family. Homodimer.

The protein localises to the secreted. May have a role in chylomicrons and VLDL secretion and catabolism. Required for efficient activation of lipoprotein lipase by ApoC-II; potent activator of LCAT. Apoa-IV is a major component of HDL and chylomicrons. This chain is Apolipoprotein A-IV, found in Canis lupus familiaris (Dog).